The primary structure comprises 952 residues: Pentatricopeptide repeat-containing protein At5g04810, chloroplastic (952 aa).

A chloroplast-targeting transit peptide spans 1–60 (MDNGGSVLSLSAPHFPYSATILRRHSPVASISFSLKQPPPQPPEPPESPPDLRRPEKSIG). Disordered stretches follow at residues 30 to 95 (SISF…VSPL) and 115 to 163 (LRLS…EFRQ). Residues 37–49 (QPPPQPPEPPESP) are compositionally biased toward pro residues. The segment covering 58–68 (SIGSSSSSSSP) has biased composition (low complexity). The span at 122-133 (SPPPPPPPPPPV) shows a compositional bias: pro residues. Positions 137–163 (TQFRDEFRSDTKPPEEETRNPQQEFRQ) are enriched in basic and acidic residues. Positions 167-238 (IFVGNLPTWI…VEFHGRILTV (72 aa)) constitute an RRM domain. The span at 259–280 (EGEEDTKMSNKSSWHQEREGSR) shows a compositional bias: basic and acidic residues. The tract at residues 259-281 (EGEEDTKMSNKSSWHQEREGSRK) is disordered. PPR repeat units follow at residues 308 to 342 (SRTE…GITP), 343 to 377 (TSRI…GIEM), 378 to 412 (SLVT…HKTL), 413 to 447 (NASI…GIDA), 448 to 482 (PIAI…GFTP), 483 to 517 (TVVT…GVKH), 518 to 552 (NLKT…GMKP), 553 to 587 (DVIL…RHRP), 588 to 622 (TTRT…GCVP), 623 to 657 (TVHT…GVSA), 658 to 692 (NEHT…GLDV), 693 to 727 (DIFT…NIPR), 728 to 762 (NSFV…GVKP), 763 to 797 (DIHT…GVKP), and 798 to 832 (NIKT…GIKP). Positions 918 to 952 (DQVSDVDSDEDDVDGEDGEDDEDVNSVSDLLSPYK) are disordered. Over residues 921-941 (SDVDSDEDDVDGEDGEDDEDV) the composition is skewed to acidic residues.

This sequence belongs to the PPR family. P subfamily.

It is found in the plastid. The protein resides in the chloroplast. Functionally, may play a role in the plastid ribosome biogenesis. This chain is Pentatricopeptide repeat-containing protein At5g04810, chloroplastic (PPR4), found in Arabidopsis thaliana (Mouse-ear cress).